Here is a 331-residue protein sequence, read N- to C-terminus: Tetraacyldisaccharide 4'-kinase (331 aa).

57–64 (SVGGNGKT) contacts ATP.

Belongs to the LpxK family.

It catalyses the reaction a lipid A disaccharide + ATP = a lipid IVA + ADP + H(+). It participates in glycolipid biosynthesis; lipid IV(A) biosynthesis; lipid IV(A) from (3R)-3-hydroxytetradecanoyl-[acyl-carrier-protein] and UDP-N-acetyl-alpha-D-glucosamine: step 6/6. In terms of biological role, transfers the gamma-phosphate of ATP to the 4'-position of a tetraacyldisaccharide 1-phosphate intermediate (termed DS-1-P) to form tetraacyldisaccharide 1,4'-bis-phosphate (lipid IVA). In Histophilus somni (strain 2336) (Haemophilus somnus), this protein is Tetraacyldisaccharide 4'-kinase.